A 466-amino-acid chain; its full sequence is MSNKMWGGRFASGPDAIMEEINASIGFDYRLAMQDIAGSKAHVAMLADVGIVSADDAADITQGLEAIKAEIESGAFTFSRALEDIHMNVESRLAALIGPAAGRLHTARSRNDQVALDFRLWVRDTIDALDGQLRGLQLALAEKAKLYAGAVMPGFTHMQSAQPVTFGHHLLAYVEMFARDRSRLRDARARLNESPLGAAALAGTSFPIDRHATARALGFDRPTANSLDSVSDRDFVLETLSAAAIAAVHLSRFAEEIVLWSTPQFGFARLSDKFSTGSSIMPQKRNPDAAELVRGKAGRVIGALTGLLVVMKGLPLTYSKDMQEDKEGAFDALHSLSLCLAAMTGMVKDIEPDTERMKAAAGAGYATATDLADWLVKALGLPFREAHHVTGRLVAAASAQDKGLEELALAEMQAVEPRINAGVFAVLGVENSVRSRMSYGGTAPANVSEQAERWLGALAAEPASKI.

Belongs to the lyase 1 family. Argininosuccinate lyase subfamily.

The protein resides in the cytoplasm. The enzyme catalyses 2-(N(omega)-L-arginino)succinate = fumarate + L-arginine. Its pathway is amino-acid biosynthesis; L-arginine biosynthesis; L-arginine from L-ornithine and carbamoyl phosphate: step 3/3. This chain is Argininosuccinate lyase, found in Methylocella silvestris (strain DSM 15510 / CIP 108128 / LMG 27833 / NCIMB 13906 / BL2).